The following is a 486-amino-acid chain: Glutamate--tRNA ligase 2 (486 aa).

The 'HIGH' region signature appears at 12–22 (PSPTGELHIGN). The 'KMSKS' region motif lies at 252 to 256 (KLSKR). Position 255 (lysine 255) interacts with ATP.

It belongs to the class-I aminoacyl-tRNA synthetase family. Glutamate--tRNA ligase type 1 subfamily. Monomer.

The protein localises to the cytoplasm. It catalyses the reaction tRNA(Glu) + L-glutamate + ATP = L-glutamyl-tRNA(Glu) + AMP + diphosphate. Catalyzes the attachment of glutamate to tRNA(Glu) in a two-step reaction: glutamate is first activated by ATP to form Glu-AMP and then transferred to the acceptor end of tRNA(Glu). The chain is Glutamate--tRNA ligase 2 from Syntrophus aciditrophicus (strain SB).